The primary structure comprises 208 residues: Large ribosomal subunit protein uL3 (208 aa).

The segment at 116 to 148 is disordered; that stretch reads GFQGVIKRHGQSRGPMAHGSRYHRRPGSMGPVA.

The protein belongs to the universal ribosomal protein uL3 family. In terms of assembly, part of the 50S ribosomal subunit. Forms a cluster with proteins L14 and L19.

Functionally, one of the primary rRNA binding proteins, it binds directly near the 3'-end of the 23S rRNA, where it nucleates assembly of the 50S subunit. The polypeptide is Large ribosomal subunit protein uL3 (Streptococcus pyogenes serotype M5 (strain Manfredo)).